A 51-amino-acid chain; its full sequence is Protein YrhD (51 aa).

The protein is Protein YrhD (yrhD) of Escherichia coli (strain K12).